The chain runs to 1040 residues: Kinesin-like protein KIN-14H (1040 aa).

The Calponin-homology (CH) domain occupies 54–176 (DLRRYEAARW…CVLALKSYRE (123 aa)). The segment at 208–242 (SEVPVDAVTNSPSSTPSSEQPLLDQSDSNTKNDGT) is disordered. Residues 215 to 242 (VTNSPSSTPSSEQPLLDQSDSNTKNDGT) show a composition bias toward polar residues. Positions 434 to 754 (SIRVYCRVRP…LKFAERVATV (321 aa)) constitute a Kinesin motor domain. 517–524 (GQTGSGKT) provides a ligand contact to ATP. A coiled-coil region spans residues 761 to 796 (VNKDTSEVKELKEQIASLKLALARKESGADQTQLQR). The span at 809–818 (LGVSSSFSKS) shows a compositional bias: low complexity. Disordered regions lie at residues 809–871 (LGVS…GKEE), 887–926 (EDEI…KCNS), and 969–1040 (MPRP…QNPK). The segment covering 840–851 (IEGQSDSASSLD) has biased composition (polar residues). Positions 887 to 923 (EDEITRSSKPENRAHTQLEKRTSSLKREATRGVDKNK) are enriched in basic and acidic residues. Residues 1018 to 1031 (SPGQTSSRHNNSTV) show a composition bias toward polar residues.

The protein belongs to the TRAFAC class myosin-kinesin ATPase superfamily. Kinesin family. KIN-14 subfamily.

The chain is Kinesin-like protein KIN-14H from Arabidopsis thaliana (Mouse-ear cress).